The primary structure comprises 96 residues: Co-chaperonin GroES (96 aa).

The protein belongs to the GroES chaperonin family. Heptamer of 7 subunits arranged in a ring. Interacts with the chaperonin GroEL.

It is found in the cytoplasm. Functionally, together with the chaperonin GroEL, plays an essential role in assisting protein folding. The GroEL-GroES system forms a nano-cage that allows encapsulation of the non-native substrate proteins and provides a physical environment optimized to promote and accelerate protein folding. GroES binds to the apical surface of the GroEL ring, thereby capping the opening of the GroEL channel. This chain is Co-chaperonin GroES, found in Cupriavidus necator (strain ATCC 17699 / DSM 428 / KCTC 22496 / NCIMB 10442 / H16 / Stanier 337) (Ralstonia eutropha).